The chain runs to 143 residues: Hemoglobin subunit alpha-2 (143 aa).

Ser2 carries the post-translational modification N-acetylserine. Residues 2–143 form the Globin domain; that stretch reads SLSSKDKATV…LALALSEKYR (142 aa). His60 lines the O2 pocket. Residue His89 participates in heme b binding.

This sequence belongs to the globin family. As to quaternary structure, hb 2 is a heterotetramer of two alpha-2 and two beta-1 chains. Hb 3 is a heterotetramer of two alpha-2 and two beta-2 chains. Red blood cells.

Functionally, involved in oxygen transport from gills to the various peripheral tissues. The protein is Hemoglobin subunit alpha-2 (hba2) of Arctogadus glacialis (Arctic cod).